Reading from the N-terminus, the 356-residue chain is S-adenosylmethionine:tRNA ribosyltransferase-isomerase (356 aa).

It belongs to the QueA family. Monomer.

Its subcellular location is the cytoplasm. The catalysed reaction is 7-aminomethyl-7-carbaguanosine(34) in tRNA + S-adenosyl-L-methionine = epoxyqueuosine(34) in tRNA + adenine + L-methionine + 2 H(+). Its pathway is tRNA modification; tRNA-queuosine biosynthesis. Transfers and isomerizes the ribose moiety from AdoMet to the 7-aminomethyl group of 7-deazaguanine (preQ1-tRNA) to give epoxyqueuosine (oQ-tRNA). In Escherichia coli O127:H6 (strain E2348/69 / EPEC), this protein is S-adenosylmethionine:tRNA ribosyltransferase-isomerase.